Consider the following 161-residue polypeptide: MRIRLVTVGKVKEKYLQDGVQEYLKRLRPYARVEIVTVPDEPIPDGASPAQEAQVMQREGERLLRALDQGGQEHVVVLDGRGKNFSSEELAAFLAERALHGDANLAFVIGGSLGLDPAVLARAGTTLSLGRMTFLHQMVPLILLEQIYRAFKINRGEKYHK.

S-adenosyl-L-methionine contacts are provided by residues Leu-78, Gly-110, and 129–134 (LGRMTF).

The protein belongs to the RNA methyltransferase RlmH family. As to quaternary structure, homodimer.

It localises to the cytoplasm. The enzyme catalyses pseudouridine(1915) in 23S rRNA + S-adenosyl-L-methionine = N(3)-methylpseudouridine(1915) in 23S rRNA + S-adenosyl-L-homocysteine + H(+). Specifically methylates the pseudouridine at position 1915 (m3Psi1915) in 23S rRNA. The protein is Ribosomal RNA large subunit methyltransferase H of Symbiobacterium thermophilum (strain DSM 24528 / JCM 14929 / IAM 14863 / T).